The chain runs to 1530 residues: Neurexin-1 (1530 aa).

Residues 1–30 (MGTALVQHGGCCLLCLSLLLLGCWAELGSG) form the signal peptide. In terms of domain architecture, Laminin G-like 1 spans 31–217 (LEFPGAEGQW…PPNSGGGSPC (187 aa)). The Extracellular segment spans residues 31-1454 (LEFPGAEGQW…EVIRESSSTT (1424 aa)). Residues Asn-125 and Asn-190 are each glycosylated (N-linked (GlcNAc...) asparagine). Residues 196–219 (PVDGSEVKLDEEPPNSGGGSPCEA) are disordered. The EGF-like 1 domain maps to 213–255 (GGSPCEAGDEGDGGVCLNGGVCSVVDDQAVCDCSRTGFRGKDC). Disulfide bonds link Cys-228–Cys-243 and Cys-245–Cys-255. Laminin G-like domains are found at residues 299 to 496 (IATF…AFKC) and 503 to 695 (DPIT…KPSC). Residues Asp-345, Leu-362, and Met-430 each coordinate Ca(2+). Cystine bridges form between Cys-460-Cys-496, Cys-666-Cys-695, Cys-703-Cys-714, Cys-708-Cys-723, and Cys-725-Cys-735. An EGF-like 2 domain is found at 699-736 (TAKPCLSNPCKNNGMCRDGWNRYVCDCSGTGYLGRSCE). Laminin G-like domains lie at 741–914 (VLSY…IDYC) and 928–1103 (DPVT…ERGC). Ca(2+) is bound by residues Asp-788 and Leu-805. N-linked (GlcNAc...) asparagine glycosylation occurs at Asn-813. Arg-864 serves as a coordination point for Ca(2+). Intrachain disulfides connect Cys-906/Cys-914, Cys-1075/Cys-1103, Cys-1110/Cys-1121, Cys-1115/Cys-1130, and Cys-1132/Cys-1142. The EGF-like 3 domain occupies 1106–1143 (PSTTCQEDSCSNQGVCLQQWDGFSCDCSMTSFSGPLCN). Positions 1149 to 1347 (YIFSKGGGQI…DANIAIVGNV (199 aa)) constitute a Laminin G-like 6 domain. 2 residues coordinate Ca(2+): Asp-1199 and Val-1216. N-linked (GlcNAc...) asparagine glycosylation is present at Asn-1246. Ca(2+)-binding residues include Ile-1298 and Asn-1300. O-linked (Xyl...) (heparan sulfate) serine glycosylation occurs at Ser-1408. The interval 1412–1443 (PSDDEDIDPCEPSSGGLANPTRVGGREPYPGS) is disordered. Residues 1455–1475 (GMVVGIVAAAALCILILLYAM) traverse the membrane as a helical segment. The Cytoplasmic portion of the chain corresponds to 1476–1530 (YKYRNRDEGSYHVDESRNYISNSAQSNGAVVKEKQPSSAKSANKNKKNKDKEYYV). Residues 1497-1523 (NSAQSNGAVVKEKQPSSAKSANKNKKN) are interaction with CASK. A disordered region spans residues 1497 to 1530 (NSAQSNGAVVKEKQPSSAKSANKNKKNKDKEYYV).

It belongs to the neurexin family. Interacts (via laminin G-like domain 2 and/or laminin G-like domain 6) with NLGN1 forming a heterotetramer, where one NLGN1 dimer interacts with one NRXN1 dimer. Also interacts (via laminin G-like domain 2 and/or laminin G-like domain 6) with NLGN2, NLGN3 and NLGN4L; interactions with NLGN1, NLGN2, NLGN3 and NLGN4L are calcium-dependent. Interacts (via cytoplasmic C-terminal region) with CASK (via the PDZ, SH3 and guanylate kinase-like domains). Interacts (via cytoplasmic C-terminus) with CASKIN1 and APBA1. Interacts (via laminin G-like domain 2) with NXPH1 and NXPH3. Alpha-type isoforms (neurexin-1-alpha) interact (via laminin G-like domain 2 and/or laminin G-like domain 6) with DAG1 (via alpha-dystroglycan chain). Interacts with LRRTM1, LRRTM2, LRRTM3 and LRRTM4. Interacts with SYT13 and SYTL1. Interacts with CBLN1, CBLN2 and, less avidly, with CBLN4. Interacts with CLSTN3. Alpha-type isoforms interact with alpha-latrotoxin from spider venom. O-glycosylated; contains heparan sulfate. Heparan sulfate attachment is required for synapse development by mediating interactions with neuroligins and LRRTM2. As to expression, brain (neuronal synapse).

Its subcellular location is the presynaptic cell membrane. Functionally, cell surface protein involved in cell-cell-interactions, exocytosis of secretory granules and regulation of signal transmission. Function is isoform-specific. Alpha-type isoforms have a long N-terminus with six laminin G-like domains and play an important role in synaptic signal transmission. Alpha-type isoforms play a role in the regulation of calcium channel activity and Ca(2+)-triggered neurotransmitter release at synapses and at neuromuscular junctions. They play an important role in Ca(2+)-triggered exocytosis of secretory granules in pituitary gland. They may affect their functions at synapses and in endocrine cells via their interactions with proteins from the exocytotic machinery. Likewise, alpha-type isoforms play a role in regulating the activity of postsynaptic NMDA receptors, a subtype of glutamate-gated ion channels. Both alpha-type and beta-type isoforms may play a role in the formation or maintenance of synaptic junctions via their interactions (via the extracellular domains) with neuroligin family members, CBLN1 or CBLN2. In vitro, triggers the de novo formation of presynaptic structures. May be involved in specification of excitatory synapses. Alpha-type isoforms were first identified as receptors for alpha-latrotoxin from spider venom. The chain is Neurexin-1 (Nrxn1) from Rattus norvegicus (Rat).